Reading from the N-terminus, the 310-residue chain is Biotin synthase (310 aa).

Residues 34–262 enclose the Radical SAM core domain; the sequence is GRVQLCALVN…TAQIRLSAGR (229 aa). C49, C53, and C56 together coordinate [4Fe-4S] cluster. [2Fe-2S] cluster contacts are provided by C93, C125, C185, and R257.

Belongs to the radical SAM superfamily. Biotin synthase family. In terms of assembly, homodimer. The cofactor is [4Fe-4S] cluster. It depends on [2Fe-2S] cluster as a cofactor.

The enzyme catalyses (4R,5S)-dethiobiotin + (sulfur carrier)-SH + 2 reduced [2Fe-2S]-[ferredoxin] + 2 S-adenosyl-L-methionine = (sulfur carrier)-H + biotin + 2 5'-deoxyadenosine + 2 L-methionine + 2 oxidized [2Fe-2S]-[ferredoxin]. It participates in cofactor biosynthesis; biotin biosynthesis; biotin from 7,8-diaminononanoate: step 2/2. Functionally, catalyzes the conversion of dethiobiotin (DTB) to biotin by the insertion of a sulfur atom into dethiobiotin via a radical-based mechanism. This is Biotin synthase from Synechococcus sp. (strain JA-3-3Ab) (Cyanobacteria bacterium Yellowstone A-Prime).